A 248-amino-acid chain; its full sequence is Probable pyridoxal 5'-phosphate synthase subunit pdx2 (248 aa).

Residue 70-72 (GES) coordinates L-glutamine. C106 functions as the Nucleophile in the catalytic mechanism. L-glutamine is bound by residues R136 and 174 to 175 (IR). Active-site charge relay system residues include H221 and E223.

This sequence belongs to the glutaminase PdxT/SNO family.

It carries out the reaction aldehydo-D-ribose 5-phosphate + D-glyceraldehyde 3-phosphate + L-glutamine = pyridoxal 5'-phosphate + L-glutamate + phosphate + 3 H2O + H(+). The enzyme catalyses L-glutamine + H2O = L-glutamate + NH4(+). Its pathway is cofactor biosynthesis; pyridoxal 5'-phosphate biosynthesis. Its function is as follows. Catalyzes the hydrolysis of glutamine to glutamate and ammonia as part of the biosynthesis of pyridoxal 5'-phosphate. The resulting ammonia molecule is channeled to the active site of pdx1. The sequence is that of Probable pyridoxal 5'-phosphate synthase subunit pdx2 from Dictyostelium discoideum (Social amoeba).